Here is a 574-residue protein sequence, read N- to C-terminus: MNAKTNIKQRLPSRHVTEGPARAPHRSYFYAMGLTTEQIHQPFVGVASCWNEAAPCNIALMRQAQAVKKGVAHAGGTPREFCTITVTDGIAMGHDGMRSSLPSRECIADSVELTVRGHAYDALVGLAGCDKSLPGMMMAMVRLNVPSIFIYGGSILPGNFRGQQVTVQDMFEAVGKHSVGAMSDEDLDEIERVACPSAGACGAQFTANTMATVSEAIGLALPYSAGAPAPYEIRDAFCMTAGEKVMELIDQNIRPRDIVTRKALENAAAVVAASGGSTNAALHLPAIAHECGIKFDLFDVAEIFKKTPYVADLKPGGRYVAKDMFEVGGIPLLMKTLLDNGFLHGDCITVTGRTIAENLKSVKWNPHQDVVHPADKPITVTGGVVGLKGNLAPEGAIVKVAGMSNLRFTGPARCFDREEDAFEAVQNRTYREGEVIVIRYEGPKGGPGMREMLQTTAALTGQGMGGKIALITDGRFSGATRGFCIGHVGPEAAIGGPIGLLEDGDIIEIDAVAGTLNVKLSDQELAQRKTKWSARATNHTTGALWKYAQQVGPAVGGAVTHPGGAHEKQCYADI.

Residues 1-20 are disordered; that stretch reads MNAKTNIKQRLPSRHVTEGP. Cysteine 56 provides a ligand contact to [2Fe-2S] cluster. Residue aspartate 88 coordinates Mg(2+). Cysteine 129 is a binding site for [2Fe-2S] cluster. Residues aspartate 130 and lysine 131 each contribute to the Mg(2+) site. The residue at position 131 (lysine 131) is an N6-carboxylysine. Cysteine 201 is a binding site for [2Fe-2S] cluster. Glutamate 451 contributes to the Mg(2+) binding site. Serine 477 functions as the Proton acceptor in the catalytic mechanism.

Belongs to the IlvD/Edd family. As to quaternary structure, homodimer. Requires [2Fe-2S] cluster as cofactor. Mg(2+) serves as cofactor.

The enzyme catalyses (2R)-2,3-dihydroxy-3-methylbutanoate = 3-methyl-2-oxobutanoate + H2O. The catalysed reaction is (2R,3R)-2,3-dihydroxy-3-methylpentanoate = (S)-3-methyl-2-oxopentanoate + H2O. Its pathway is amino-acid biosynthesis; L-isoleucine biosynthesis; L-isoleucine from 2-oxobutanoate: step 3/4. It participates in amino-acid biosynthesis; L-valine biosynthesis; L-valine from pyruvate: step 3/4. Functionally, functions in the biosynthesis of branched-chain amino acids. Catalyzes the dehydration of (2R,3R)-2,3-dihydroxy-3-methylpentanoate (2,3-dihydroxy-3-methylvalerate) into 2-oxo-3-methylpentanoate (2-oxo-3-methylvalerate) and of (2R)-2,3-dihydroxy-3-methylbutanoate (2,3-dihydroxyisovalerate) into 2-oxo-3-methylbutanoate (2-oxoisovalerate), the penultimate precursor to L-isoleucine and L-valine, respectively. The protein is Dihydroxy-acid dehydratase 2 of Bradyrhizobium diazoefficiens (strain JCM 10833 / BCRC 13528 / IAM 13628 / NBRC 14792 / USDA 110).